Reading from the N-terminus, the 579-residue chain is Rho guanine nucleotide exchange factor 25 (579 aa).

Disordered stretches follow at residues 27-61 and 172-194; these read AVPGQEGPQERDPLGPGSTKTESECTEEDQTGERE and VKAQPAEEETLSQAPKNEEEQKK. The region spanning 199 to 375 is the DH domain; the sequence is RSMFVLSELV…CFVPKRCNDM (177 aa). Positions 317–338 are important for binding to Rho GTPases; that stretch reads LGHRLQLSDLLIKPVQRIMKYQ. In terms of domain architecture, PH spans 380 to 499; that stretch reads RLRGFEGKLT…ESQTNSLGRS (120 aa). Positions 472–498 are sufficient to bind activated GNAQ; the sequence is SQRDFLNALQSPIEYQRRESQTNSLGR. Disordered regions lie at residues 487–516 and 546–579; these read QRRESQTNSLGRSGGPGVGSPGRMAQVSMH and LSETPLTPYDPPALPTVNSPPGQARLAKLDEDEL.

In terms of assembly, interacts with activated GNAQ and GNA11. Interacts with RHOA, CDC42 and RAC1. Interacts (via the DH domain) with POPDC1 (via the C-terminus cytoplasmic tail).

It localises to the cytoplasm. Its subcellular location is the myofibril. The protein localises to the sarcomere. It is found in the cell membrane. In terms of biological role, may play a role in actin cytoskeleton reorganization in different tissues since its activation induces formation of actin stress fibers. It works as a guanine nucleotide exchange factor for Rho family of small GTPases. Links specifically G alpha q/11-coupled receptors to RHOA activation. May be an important regulator of processes involved in axon and dendrite formation. In neurons seems to be an exchange factor primarily for RAC1. Involved in skeletal myogenesis. This Rattus norvegicus (Rat) protein is Rho guanine nucleotide exchange factor 25 (Arhgef25).